The following is a 448-amino-acid chain: Chromosomal replication initiator protein DnaA (448 aa).

A domain I, interacts with DnaA modulators region spans residues Met-1 to Lys-73. Residues Lys-73–Thr-109 form a domain II region. A domain III, AAA+ region region spans residues Met-110–Ser-326. Residues Gly-154, Gly-156, Lys-157, and Thr-158 each contribute to the ATP site. The tract at residues Ser-327 to Lys-448 is domain IV, binds dsDNA.

This sequence belongs to the DnaA family. Oligomerizes as a right-handed, spiral filament on DNA at oriC.

It is found in the cytoplasm. In terms of biological role, plays an essential role in the initiation and regulation of chromosomal replication. ATP-DnaA binds to the origin of replication (oriC) to initiate formation of the DNA replication initiation complex once per cell cycle. Binds the DnaA box (a 9 base pair repeat at the origin) and separates the double-stranded (ds)DNA. Forms a right-handed helical filament on oriC DNA; dsDNA binds to the exterior of the filament while single-stranded (ss)DNA is stabiized in the filament's interior. The ATP-DnaA-oriC complex binds and stabilizes one strand of the AT-rich DNA unwinding element (DUE), permitting loading of DNA polymerase. After initiation quickly degrades to an ADP-DnaA complex that is not apt for DNA replication. Binds acidic phospholipids. This chain is Chromosomal replication initiator protein DnaA, found in Clostridium botulinum (strain 657 / Type Ba4).